The chain runs to 159 residues: Protein-export protein SecB (159 aa).

This sequence belongs to the SecB family. Homotetramer, a dimer of dimers. One homotetramer interacts with 1 SecA dimer.

The protein localises to the cytoplasm. One of the proteins required for the normal export of preproteins out of the cell cytoplasm. It is a molecular chaperone that binds to a subset of precursor proteins, maintaining them in a translocation-competent state. It also specifically binds to its receptor SecA. This is Protein-export protein SecB from Hahella chejuensis (strain KCTC 2396).